The chain runs to 976 residues: MTESPTTTPGSTSGAPSGVPSGVNDAESDAPRHRYTAELAAGVERTWQQNWARLGTFNVPNPVGSLAPSDGSPVPEDKLFVQDMFPYPSGEGLHVGHPLGYIATDVFARYHRMKGRNVLHALGFDAFGLPAEQYAVQTGTHPRTRTEANVVNFRRQLGRLGLGHDSRRSFSTTDVEFYKWTQWIFLQIYNAWFDAAANKARPISELVAEFDSGARSLVDGRDWSTLSAGERADVIDDHRLVYRADSMVNWCPGLGTVLANEEVTSDGRSDRGNFPVFRKRLRQWMMRITAYSDRLLDDLDVLDWPDQVKTMQRNWIGRSTGASALFTATRSNGETVGLEVFTTRPDTLFGATYLVLAPEHDLVDDLVGAGWPAGVDPLWTGGGATPAEAVAAYRRAIAVKSDLERQESKEKTGVFLGSHAINPATGQPVPIFIADYVLAGYGTGAIMAVPGHDQRDWDFARALGLPVVEVIAGGDISQAAYTGDGVLVNSGFLDGMSVGEAKQAITARLESDGYGQARIEFKLRDWLFARQRYWGEPFPIVYDADGRPHALDESALPVELPDVPDYSPVLFDPDDANSEPSPPLGKATEWLHVELDLGDGLKPYSRDTNVMPQWAGSSWYELRYTDPHNADRFCAKENETYWMGPRPAEHGPDDPGGVDLYVGGAEHAVLHLLYARFWHKVLYDLGHVSSREPYRKLINQGYIQAFAYTDARGSYVPAEEVIERDGGFVYPGADGEIEVFQEFGKIGKSLKNSISPDEICDDYGADTLRVYEMSMGPIEASRPWATKDVIGAHRFLQRVWRLVIDENTGEILVADTPAELDTDTLRALHRAIAGVAEDYAALRNNTAVAKLIEYTNFLTKRHRDAVPRAVIEPLVLMVAPLAPHLAEELWQRLGHTTSLAHGPFPAADPAYLIDDTVEYPVQVNGKVRGRVVVAADADDDAVKAAALADQKVQAFLAGASPRKVIVVAGRLVNLVV.

The segment covering 1 to 23 (MTESPTTTPGSTSGAPSGVPSGV) has biased composition (low complexity). The disordered stretch occupies residues 1-34 (MTESPTTTPGSTSGAPSGVPSGVNDAESDAPRHR). A 'HIGH' region motif is present at residues 86-97 (PYPSGEGLHVGH). Residues 745 to 749 (KIGKS) carry the 'KMSKS' region motif. Lysine 748 lines the ATP pocket.

It belongs to the class-I aminoacyl-tRNA synthetase family.

The protein resides in the cytoplasm. The catalysed reaction is tRNA(Leu) + L-leucine + ATP = L-leucyl-tRNA(Leu) + AMP + diphosphate. This Mycobacterium ulcerans (strain Agy99) protein is Leucine--tRNA ligase.